The sequence spans 263 residues: Kallikrein 1-related peptidase b24 (263 aa).

Positions 1–17 (MWFLILFLALSLGGIDA) are cleaved as a signal peptide. A propeptide spans 18-24 (APPVQSR) (activation peptide). Positions 25–260 (VVGGFKCEKN…FASWIKDTMA (236 aa)) constitute a Peptidase S1 domain. 5 disulfides stabilise this stretch: Cys31-Cys175, Cys50-Cys66, Cys154-Cys221, Cys186-Cys200, and Cys211-Cys236. The Charge relay system role is filled by His65. 2 N-linked (GlcNAc...) asparagine glycosylation sites follow: Asn69 and Asn105. Asp122 acts as the Charge relay system in catalysis. The N-linked (GlcNAc...) asparagine glycan is linked to Asn185. Residue Ser215 is the Charge relay system of the active site.

Belongs to the peptidase S1 family. Kallikrein subfamily.

The catalysed reaction is Preferential cleavage of Arg-|-Xaa bonds in small molecule substrates. Highly selective action to release kallidin (lysyl-bradykinin) from kininogen involves hydrolysis of Met-|-Xaa or Leu-|-Xaa.. Glandular kallikreins cleave Met-Lys and Arg-Ser bonds in kininogen to release Lys-bradykinin. The protein is Kallikrein 1-related peptidase b24 (Klk1b24) of Mus musculus (Mouse).